Here is a 284-residue protein sequence, read N- to C-terminus: Bifunctional protein FolD (284 aa).

Residue 166-168 coordinates NADP(+); sequence GAS.

This sequence belongs to the tetrahydrofolate dehydrogenase/cyclohydrolase family. In terms of assembly, homodimer.

The enzyme catalyses (6R)-5,10-methylene-5,6,7,8-tetrahydrofolate + NADP(+) = (6R)-5,10-methenyltetrahydrofolate + NADPH. It carries out the reaction (6R)-5,10-methenyltetrahydrofolate + H2O = (6R)-10-formyltetrahydrofolate + H(+). The protein operates within one-carbon metabolism; tetrahydrofolate interconversion. Its function is as follows. Catalyzes the oxidation of 5,10-methylenetetrahydrofolate to 5,10-methenyltetrahydrofolate and then the hydrolysis of 5,10-methenyltetrahydrofolate to 10-formyltetrahydrofolate. In Legionella pneumophila (strain Corby), this protein is Bifunctional protein FolD.